Reading from the N-terminus, the 250-residue chain is Small ribosomal subunit protein uS2 (250 aa).

It belongs to the universal ribosomal protein uS2 family.

The chain is Small ribosomal subunit protein uS2 from Teredinibacter turnerae (strain ATCC 39867 / T7901).